We begin with the raw amino-acid sequence, 141 residues long: Large ribosomal subunit protein bL17 (141 aa).

This sequence belongs to the bacterial ribosomal protein bL17 family. Part of the 50S ribosomal subunit. Contacts protein L32.

In Sinorhizobium medicae (strain WSM419) (Ensifer medicae), this protein is Large ribosomal subunit protein bL17.